The primary structure comprises 1298 residues: DNA repair protein rad-50 (1298 aa).

9 residues coordinate ATP: R13, N38, G39, G41, K42, T43, T44, I66, and Q158. T43 is a Mg(2+) binding site. Mg(2+) is bound at residue Q158. 3 coiled-coil regions span residues 222–291 (ARQN…IRVE), 317–598 (EERA…QYRK), and 622–660 (AEEV…IEES). The 98-residue stretch at 622–719 (AEEVSEKLEN…EEIIIVKAEG (98 aa)) folds into the Zinc-hook domain. Zn(2+) contacts are provided by C666 and C669. Coiled coils occupy residues 691 to 719 (LSFP…KAEG) and 754 to 1092 (KNEK…KESI).

It belongs to the SMC family. RAD50 subfamily. As to quaternary structure, component of the MRN complex composed of two heterodimers rad-50 and mre-11 associated with a single nbs-1. Zn(2+) serves as cofactor.

The protein resides in the nucleus. It is found in the chromosome. It carries out the reaction ATP + H2O = ADP + phosphate + H(+). Its function is as follows. Component of the MRN complex, which plays a central role in double-strand break (DSB) repair, DNA recombination, maintenance of telomere integrity and meiosis. The MRN complex is involved in the repair of DNA double-strand breaks (DSBs) via homologous recombination (HR), an error-free mechanism which primarily occurs during S and G2 phases. The complex (1) mediates the end resection of damaged DNA, which generates proper single-stranded DNA, a key initial steps in HR, and is (2) required for the recruitment of other repair factors and efficient activation of ATM and ATR upon DNA damage. The MRN complex possesses single-strand endonuclease activity and double-strand-specific 3'-5' exonuclease activity, which are provided by mre-11, to initiate end resection, which is required for single-strand invasion and recombination. Within the complex, rad-50 is both required to bind DNA ends and hold them in close proximity and regulate the activity of mre-11. Rad-50 provides an ATP-dependent control of mre-11 by positioning DNA ends into the mre-11 active site: ATP-binding induces a large structural change from an open form with accessible mre-11 nuclease sites into a closed form. The protein is DNA repair protein rad-50 (rad-50) of Caenorhabditis elegans.